A 279-amino-acid chain; its full sequence is MTQFDKQYNSIIKEIIKNGISDEEFDVRTKWESDGTPAHTLSIITKQMRFDNSEVPILTTKKVAWKTAIKELLWIWQLKSNDVTELNKMGVHIWDQWKQEDGSIGHAYGFQLAKKNRNLNGEKVDQVDYLLHQLKNNPSSRRHITMLWNPDELDSMALTPCVYETQWYVKQGKLHLEVRARSNDMALGNPFNVFQYNVLQRMIAQVTGYELGEYIFNIGDCHVYTRHIDNLKIQMEREQFEAPKLWINPEVKDFYDFTIDDFKLINYKHGDRLSFEVAV.

Position 141-142 (141-142 (RR)) interacts with dUMP. Cysteine 161 acts as the Nucleophile in catalysis. DUMP-binding positions include 181–184 (RSND), asparagine 192, and 222–224 (HVY). Residue aspartate 184 coordinates (6R)-5,10-methylene-5,6,7,8-tetrahydrofolate. (6R)-5,10-methylene-5,6,7,8-tetrahydrofolate is bound at residue alanine 278.

It belongs to the thymidylate synthase family. Bacterial-type ThyA subfamily. As to quaternary structure, homodimer.

Its subcellular location is the cytoplasm. The enzyme catalyses dUMP + (6R)-5,10-methylene-5,6,7,8-tetrahydrofolate = 7,8-dihydrofolate + dTMP. Its pathway is pyrimidine metabolism; dTTP biosynthesis. Functionally, catalyzes the reductive methylation of 2'-deoxyuridine-5'-monophosphate (dUMP) to 2'-deoxythymidine-5'-monophosphate (dTMP) while utilizing 5,10-methylenetetrahydrofolate (mTHF) as the methyl donor and reductant in the reaction, yielding dihydrofolate (DHF) as a by-product. This enzymatic reaction provides an intracellular de novo source of dTMP, an essential precursor for DNA biosynthesis. In Bacillus mojavensis, this protein is Thymidylate synthase.